The primary structure comprises 249 residues: 5'-nucleotidase SurE (249 aa).

A divalent metal cation-binding residues include D8, D9, S39, and N91.

Belongs to the SurE nucleotidase family. It depends on a divalent metal cation as a cofactor.

Its subcellular location is the cytoplasm. The catalysed reaction is a ribonucleoside 5'-phosphate + H2O = a ribonucleoside + phosphate. Functionally, nucleotidase that shows phosphatase activity on nucleoside 5'-monophosphates. In Haemophilus influenzae (strain 86-028NP), this protein is 5'-nucleotidase SurE.